Here is a 235-residue protein sequence, read N- to C-terminus: Proteasome subunit alpha type-2 (235 aa).

The protein belongs to the peptidase T1A family. The 26S proteasome consists of a 20S proteasome core and two 19S regulatory subunits. The 20S proteasome core is composed of 28 subunits that are arranged in four stacked rings, resulting in a barrel-shaped structure. The two end rings are each formed by seven alpha subunits, and the two central rings are each formed by seven beta subunits. The catalytic chamber with the active sites is on the inside of the barrel.

The protein resides in the cytoplasm. The protein localises to the nucleus. In terms of biological role, the proteasome is a multicatalytic proteinase complex which is characterized by its ability to cleave peptides with Arg, Phe, Tyr, Leu, and Glu adjacent to the leaving group at neutral or slightly basic pH. The proteasome has an ATP-dependent proteolytic activity. The chain is Proteasome subunit alpha type-2 (PAB1) from Oryza sativa subsp. indica (Rice).